A 60-amino-acid chain; its full sequence is Mastoparan-A (60 aa).

Positions 1–27 (MKNTILILFTAFIALLGFFGMSAEALA) are cleaved as a signal peptide. AXPX repeat units lie at residues 27-30 (ADPI), 31-34 (ADPL), 35-38 (AGPN), and 41-43 (ADP). The propeptide occupies 28–45 (DPIADPLAGPNAEADPEA). Ile59 is modified (isoleucine amide).

It belongs to the MCD family. Mastoparan subfamily. In terms of tissue distribution, expressed by the venom gland.

Its subcellular location is the secreted. It is found in the target cell membrane. Antimicrobial and mast cell degranulating peptide. Has broad spectrum antibacterial activity against both Gram-positive and Gram-negative bacteria (S.aureus MIC=32-64 ug/ml, S.xylosus MIC=2 ug/ml, S.alactolyticus MIC=12 ug/ml, C.koseri MIC=4 ug/ml, E.coli MIC=8 ug/ml, K.pneumoniae MIC=32 ug/ml, P.aerugiosa MIC=192 ug/ml, S.choleraesuis MIC=32 ug/ml, S.typhimurium MIC=32 ug/ml, V.parahamelytics MIC=16 ug/ml). Affects membrane permeability of E.coli. Shows hemolytic activities on sheep, chicken and human erythrocytes. Its mast cell degranulation activity may be related to the activation of G-protein coupled receptors in mast cells as well as interaction with other proteins located in cell endosomal membranes in the mast cells. This Vespa analis (Yellow-vented hornet) protein is Mastoparan-A.